The following is a 270-amino-acid chain: UPF0354 protein BC_4690 (270 aa).

The protein belongs to the UPF0354 family.

The chain is UPF0354 protein BC_4690 from Bacillus cereus (strain ATCC 14579 / DSM 31 / CCUG 7414 / JCM 2152 / NBRC 15305 / NCIMB 9373 / NCTC 2599 / NRRL B-3711).